The following is a 905-amino-acid chain: Protein translocase subunit SecA (905 aa).

Residues Gln-87, 105-109 (GEGKT), and Asp-512 contribute to the ATP site. The tract at residues 565 to 584 (RRIDNQLRGRSGRQGDPGSS) is disordered. 4 residues coordinate Zn(2+): Cys-886, Cys-888, Cys-897, and His-898.

Belongs to the SecA family. In terms of assembly, monomer and homodimer. Part of the essential Sec protein translocation apparatus which comprises SecA, SecYEG and auxiliary proteins SecDF-YajC and YidC. It depends on Zn(2+) as a cofactor.

The protein localises to the cell inner membrane. It localises to the cytoplasm. It catalyses the reaction ATP + H2O + cellular proteinSide 1 = ADP + phosphate + cellular proteinSide 2.. Its function is as follows. Part of the Sec protein translocase complex. Interacts with the SecYEG preprotein conducting channel. Has a central role in coupling the hydrolysis of ATP to the transfer of proteins into and across the cell membrane, serving both as a receptor for the preprotein-SecB complex and as an ATP-driven molecular motor driving the stepwise translocation of polypeptide chains across the membrane. The protein is Protein translocase subunit SecA of Haemophilus ducreyi (strain 35000HP / ATCC 700724).